The chain runs to 108 residues: uncharacterized protein (108 aa).

Residues 48–73 show a composition bias toward low complexity; that stretch reads NSNIPSSSSSSPSFASFFSSTSTSAT. Residues 48–81 form a disordered region; sequence NSNIPSSSSSSPSFASFFSSTSTSATLNGSSNNK.

This is an uncharacterized protein from Dictyostelium discoideum (Social amoeba).